Here is a 1383-residue protein sequence, read N- to C-terminus: DNA-directed RNA polymerase subunit beta (1383 aa).

This sequence belongs to the RNA polymerase beta chain family. The RNAP catalytic core consists of 2 alpha, 1 beta, 1 beta' and 1 omega subunit. When a sigma factor is associated with the core the holoenzyme is formed, which can initiate transcription.

The enzyme catalyses RNA(n) + a ribonucleoside 5'-triphosphate = RNA(n+1) + diphosphate. Its function is as follows. DNA-dependent RNA polymerase catalyzes the transcription of DNA into RNA using the four ribonucleoside triphosphates as substrates. This chain is DNA-directed RNA polymerase subunit beta, found in Bartonella bacilliformis (strain ATCC 35685 / KC583 / Herrer 020/F12,63).